The sequence spans 221 residues: N-(5'-phosphoribosyl)anthranilate isomerase (221 aa).

The protein belongs to the TrpF family.

It carries out the reaction N-(5-phospho-beta-D-ribosyl)anthranilate = 1-(2-carboxyphenylamino)-1-deoxy-D-ribulose 5-phosphate. It functions in the pathway amino-acid biosynthesis; L-tryptophan biosynthesis; L-tryptophan from chorismate: step 3/5. The sequence is that of N-(5'-phosphoribosyl)anthranilate isomerase from Geobacillus thermodenitrificans (strain NG80-2).